The following is a 1360-amino-acid chain: DNA-directed RNA polymerase subunit beta (1360 aa).

This sequence belongs to the RNA polymerase beta chain family. As to quaternary structure, the RNAP catalytic core consists of 2 alpha, 1 beta, 1 beta' and 1 omega subunit. When a sigma factor is associated with the core the holoenzyme is formed, which can initiate transcription.

The enzyme catalyses RNA(n) + a ribonucleoside 5'-triphosphate = RNA(n+1) + diphosphate. In terms of biological role, DNA-dependent RNA polymerase catalyzes the transcription of DNA into RNA using the four ribonucleoside triphosphates as substrates. The sequence is that of DNA-directed RNA polymerase subunit beta from Magnetococcus marinus (strain ATCC BAA-1437 / JCM 17883 / MC-1).